The chain runs to 145 residues: Large ribosomal subunit protein uL15 (145 aa).

Positions 1–54 (MKLNELKYTPGSKKEATRVGRGMASGKGKTATRGHKGQNSRSGGGVRPGFEGGQ) are disordered. Over residues 42–52 (SGGGVRPGFEG) the composition is skewed to gly residues.

This sequence belongs to the universal ribosomal protein uL15 family. In terms of assembly, part of the 50S ribosomal subunit.

Binds to the 23S rRNA. The sequence is that of Large ribosomal subunit protein uL15 from Mycoplasma capricolum subsp. capricolum (strain California kid / ATCC 27343 / NCTC 10154).